A 395-amino-acid chain; its full sequence is Bifunctional enzyme IspD/IspF (395 aa).

Residues Met1–Pro237 are 2-C-methyl-D-erythritol 4-phosphate cytidylyltransferase. A 2-C-methyl-D-erythritol 2,4-cyclodiphosphate synthase region spans residues Cys238–Pro395. 2 residues coordinate a divalent metal cation: Asp244 and His246. 4-CDP-2-C-methyl-D-erythritol 2-phosphate is bound by residues Asp244–His246 and His270–Ser271. Position 278 (His278) interacts with a divalent metal cation. Residues Asp292–Gly294, Phe297–Asp301, Thr368–Glu371, and Phe375 each bind 4-CDP-2-C-methyl-D-erythritol 2-phosphate.

This sequence in the N-terminal section; belongs to the IspD/TarI cytidylyltransferase family. IspD subfamily. In the C-terminal section; belongs to the IspF family. A divalent metal cation is required as a cofactor.

It carries out the reaction 2-C-methyl-D-erythritol 4-phosphate + CTP + H(+) = 4-CDP-2-C-methyl-D-erythritol + diphosphate. The catalysed reaction is 4-CDP-2-C-methyl-D-erythritol 2-phosphate = 2-C-methyl-D-erythritol 2,4-cyclic diphosphate + CMP. It functions in the pathway isoprenoid biosynthesis; isopentenyl diphosphate biosynthesis via DXP pathway; isopentenyl diphosphate from 1-deoxy-D-xylulose 5-phosphate: step 2/6. Its pathway is isoprenoid biosynthesis; isopentenyl diphosphate biosynthesis via DXP pathway; isopentenyl diphosphate from 1-deoxy-D-xylulose 5-phosphate: step 4/6. Bifunctional enzyme that catalyzes the formation of 4-diphosphocytidyl-2-C-methyl-D-erythritol from CTP and 2-C-methyl-D-erythritol 4-phosphate (MEP) (IspD), and catalyzes the conversion of 4-diphosphocytidyl-2-C-methyl-D-erythritol 2-phosphate (CDP-ME2P) to 2-C-methyl-D-erythritol 2,4-cyclodiphosphate (ME-CPP) with a corresponding release of cytidine 5-monophosphate (CMP) (IspF). In Nitratidesulfovibrio vulgaris (strain ATCC 29579 / DSM 644 / CCUG 34227 / NCIMB 8303 / VKM B-1760 / Hildenborough) (Desulfovibrio vulgaris), this protein is Bifunctional enzyme IspD/IspF.